The chain runs to 835 residues: Leucine--tRNA ligase (835 aa).

Residues 36–46 carry the 'HIGH' region motif; that stretch reads PYPSGKIHVGH. The 'KMSKS' region motif lies at 602–606; the sequence is KMSKS. Lys605 contributes to the ATP binding site.

Belongs to the class-I aminoacyl-tRNA synthetase family.

Its subcellular location is the cytoplasm. The catalysed reaction is tRNA(Leu) + L-leucine + ATP = L-leucyl-tRNA(Leu) + AMP + diphosphate. In Rickettsia peacockii (strain Rustic), this protein is Leucine--tRNA ligase.